The sequence spans 150 residues: Peptide deformylase 2 (150 aa).

2 residues coordinate Fe cation: Cys-89 and His-131. The active site involves Glu-132. His-135 is a Fe cation binding site.

This sequence belongs to the polypeptide deformylase family. The cofactor is Fe(2+).

It carries out the reaction N-terminal N-formyl-L-methionyl-[peptide] + H2O = N-terminal L-methionyl-[peptide] + formate. In terms of biological role, removes the formyl group from the N-terminal Met of newly synthesized proteins. Requires at least a dipeptide for an efficient rate of reaction. N-terminal L-methionine is a prerequisite for activity but the enzyme has broad specificity at other positions. The sequence is that of Peptide deformylase 2 from Clostridium acetobutylicum (strain ATCC 824 / DSM 792 / JCM 1419 / IAM 19013 / LMG 5710 / NBRC 13948 / NRRL B-527 / VKM B-1787 / 2291 / W).